The following is a 335-amino-acid chain: Phosphate acyltransferase (335 aa).

Belongs to the PlsX family. Homodimer. Probably interacts with PlsY.

The protein resides in the cytoplasm. It carries out the reaction a fatty acyl-[ACP] + phosphate = an acyl phosphate + holo-[ACP]. It functions in the pathway lipid metabolism; phospholipid metabolism. Functionally, catalyzes the reversible formation of acyl-phosphate (acyl-PO(4)) from acyl-[acyl-carrier-protein] (acyl-ACP). This enzyme utilizes acyl-ACP as fatty acyl donor, but not acyl-CoA. The sequence is that of Phosphate acyltransferase from Brevibacillus brevis (strain 47 / JCM 6285 / NBRC 100599).